The primary structure comprises 423 residues: Serine--tRNA ligase (423 aa).

231–233 serves as a coordination point for L-serine; it reads TGE. Residue 262 to 264 coordinates ATP; that stretch reads RSE. Position 285 (glutamate 285) interacts with L-serine. 349-352 contacts ATP; the sequence is EISS. Residue serine 385 coordinates L-serine.

The protein belongs to the class-II aminoacyl-tRNA synthetase family. Type-1 seryl-tRNA synthetase subfamily. As to quaternary structure, homodimer. The tRNA molecule binds across the dimer.

It localises to the cytoplasm. The enzyme catalyses tRNA(Ser) + L-serine + ATP = L-seryl-tRNA(Ser) + AMP + diphosphate + H(+). It carries out the reaction tRNA(Sec) + L-serine + ATP = L-seryl-tRNA(Sec) + AMP + diphosphate + H(+). It functions in the pathway aminoacyl-tRNA biosynthesis; selenocysteinyl-tRNA(Sec) biosynthesis; L-seryl-tRNA(Sec) from L-serine and tRNA(Sec): step 1/1. Functionally, catalyzes the attachment of serine to tRNA(Ser). Is also able to aminoacylate tRNA(Sec) with serine, to form the misacylated tRNA L-seryl-tRNA(Sec), which will be further converted into selenocysteinyl-tRNA(Sec). The polypeptide is Serine--tRNA ligase (Coxiella burnetii (strain CbuG_Q212) (Coxiella burnetii (strain Q212))).